Reading from the N-terminus, the 551-residue chain is Arginine--tRNA ligase (551 aa).

A 'HIGH' region motif is present at residues 123 to 133 (ANPTGPLTIGR).

This sequence belongs to the class-I aminoacyl-tRNA synthetase family. In terms of assembly, monomer.

The protein resides in the cytoplasm. The enzyme catalyses tRNA(Arg) + L-arginine + ATP = L-arginyl-tRNA(Arg) + AMP + diphosphate. This chain is Arginine--tRNA ligase, found in Chlorobaculum tepidum (strain ATCC 49652 / DSM 12025 / NBRC 103806 / TLS) (Chlorobium tepidum).